Here is a 109-residue protein sequence, read N- to C-terminus: MIKLKVKKGDEVVVITGKHKGKKGKILKVFPEDSKVIVSGVNVVKKHTKSNQMSEGGIITKELPIHISNIAHIDPKTGNPTKVAFKFLEDGSKVRVAKKSGEIIGKEGK.

The protein belongs to the universal ribosomal protein uL24 family. In terms of assembly, part of the 50S ribosomal subunit.

Its function is as follows. One of two assembly initiator proteins, it binds directly to the 5'-end of the 23S rRNA, where it nucleates assembly of the 50S subunit. Functionally, one of the proteins that surrounds the polypeptide exit tunnel on the outside of the subunit. The protein is Large ribosomal subunit protein uL24 of Rickettsia africae (strain ESF-5).